The chain runs to 99 residues: Large ribosomal subunit protein eL21 (99 aa).

It belongs to the eukaryotic ribosomal protein eL21 family.

The polypeptide is Large ribosomal subunit protein eL21 (Pyrobaculum calidifontis (strain DSM 21063 / JCM 11548 / VA1)).